The chain runs to 501 residues: Putative matrix metalloproteinase (501 aa).

Positions 1–26 (MMPQYERKQIIIHISCVIICVVVTLT) are cleaved as a signal peptide. N-linked (GlcNAc...) asparagine; by host glycosylation is found at N48, N58, N61, N94, N116, and N163. H179 is a Zn(2+) binding site. E180 is a catalytic residue. Residues H183 and H189 each coordinate Zn(2+). N-linked (GlcNAc...) asparagine; by host glycosylation is found at N192, N267, N280, and N291. One copy of the Hemopexin repeat lies at 311 to 356 (TGHIDTISVIRGELYIFVDEYHWRFRSNGLLYSGYPLKTTHSWSVP). N379 and N493 each carry an N-linked (GlcNAc...) asparagine; by host glycan.

Belongs to the peptidase M10A family. Requires Zn(2+) as cofactor.

This Trichoplusia ni ascovirus 2c (TnAV-2c) protein is Putative matrix metalloproteinase.